Consider the following 169-residue polypeptide: Putative hydrogenase maturation protease MJ0631 (169 aa).

The protein belongs to the peptidase A31 family.

The chain is Putative hydrogenase maturation protease MJ0631 from Methanocaldococcus jannaschii (strain ATCC 43067 / DSM 2661 / JAL-1 / JCM 10045 / NBRC 100440) (Methanococcus jannaschii).